The following is a 200-amino-acid chain: Probable molybdenum cofactor guanylyltransferase (200 aa).

GTP is bound by residues 9–11, Lys21, Asp69, and Asp100; that span reads LAG. Asp100 is a binding site for Mg(2+).

It belongs to the MobA family. Mg(2+) is required as a cofactor.

Its subcellular location is the cytoplasm. It catalyses the reaction Mo-molybdopterin + GTP + H(+) = Mo-molybdopterin guanine dinucleotide + diphosphate. Its function is as follows. Transfers a GMP moiety from GTP to Mo-molybdopterin (Mo-MPT) cofactor (Moco or molybdenum cofactor) to form Mo-molybdopterin guanine dinucleotide (Mo-MGD) cofactor. The polypeptide is Probable molybdenum cofactor guanylyltransferase (Bacillus mycoides (strain KBAB4) (Bacillus weihenstephanensis)).